The chain runs to 132 residues: ATP synthase epsilon chain (132 aa).

This sequence belongs to the ATPase epsilon chain family. In terms of assembly, F-type ATPases have 2 components, CF(1) - the catalytic core - and CF(0) - the membrane proton channel. CF(1) has five subunits: alpha(3), beta(3), gamma(1), delta(1), epsilon(1). CF(0) has three main subunits: a, b and c.

Its subcellular location is the cell inner membrane. Produces ATP from ADP in the presence of a proton gradient across the membrane. This Jannaschia sp. (strain CCS1) protein is ATP synthase epsilon chain.